Reading from the N-terminus, the 586-residue chain is Arginine--tRNA ligase (586 aa).

Residues 131 to 141 (ANPTGPMHVGH) carry the 'HIGH' region motif.

The protein belongs to the class-I aminoacyl-tRNA synthetase family. In terms of assembly, monomer.

The protein localises to the cytoplasm. The enzyme catalyses tRNA(Arg) + L-arginine + ATP = L-arginyl-tRNA(Arg) + AMP + diphosphate. The chain is Arginine--tRNA ligase from Xanthobacter autotrophicus (strain ATCC BAA-1158 / Py2).